The sequence spans 565 residues: Arginine--tRNA ligase (565 aa).

A 'HIGH' region motif is present at residues 120-130 (PNIAKPFHVGH).

Belongs to the class-I aminoacyl-tRNA synthetase family. Monomer.

It is found in the cytoplasm. It catalyses the reaction tRNA(Arg) + L-arginine + ATP = L-arginyl-tRNA(Arg) + AMP + diphosphate. The protein is Arginine--tRNA ligase of Clostridium perfringens (strain 13 / Type A).